Consider the following 476-residue polypeptide: Glycogen synthase (476 aa).

Lysine 15 is an ADP-alpha-D-glucose binding site.

The protein belongs to the glycosyltransferase 1 family. Bacterial/plant glycogen synthase subfamily.

It carries out the reaction [(1-&gt;4)-alpha-D-glucosyl](n) + ADP-alpha-D-glucose = [(1-&gt;4)-alpha-D-glucosyl](n+1) + ADP + H(+). The protein operates within glycan biosynthesis; glycogen biosynthesis. Its function is as follows. Synthesizes alpha-1,4-glucan chains using ADP-glucose. In Leptospira biflexa serovar Patoc (strain Patoc 1 / Ames), this protein is Glycogen synthase.